The sequence spans 459 residues: Putrescine aminotransferase (459 aa).

Pyridoxal 5'-phosphate is bound by residues 150-151 (GT) and Gln-274. Position 300 is an N6-(pyridoxal phosphate)lysine (Lys-300). Pyridoxal 5'-phosphate is bound at residue Thr-332.

Belongs to the class-III pyridoxal-phosphate-dependent aminotransferase family. Putrescine aminotransferase subfamily. Pyridoxal 5'-phosphate is required as a cofactor.

It carries out the reaction an alkane-alpha,omega-diamine + 2-oxoglutarate = an omega-aminoaldehyde + L-glutamate. It catalyses the reaction putrescine + 2-oxoglutarate = 1-pyrroline + L-glutamate + H2O. The enzyme catalyses cadaverine + 2-oxoglutarate = 5-aminopentanal + L-glutamate. The protein operates within amine and polyamine degradation; putrescine degradation; 4-aminobutanal from putrescine (transaminase route): step 1/1. Its function is as follows. Catalyzes the aminotransferase reaction from putrescine to 2-oxoglutarate, leading to glutamate and 4-aminobutanal, which spontaneously cyclizes to form 1-pyrroline. This is the first step in one of two pathways for putrescine degradation, where putrescine is converted into 4-aminobutanoate (gamma-aminobutyrate or GABA) via 4-aminobutanal. Also functions as a cadaverine transaminase in a a L-lysine degradation pathway to succinate that proceeds via cadaverine, glutarate and L-2-hydroxyglutarate. The polypeptide is Putrescine aminotransferase (Escherichia coli (strain K12 / MC4100 / BW2952)).